Here is a 62-residue protein sequence, read N- to C-terminus: uncharacterized protein (62 aa).

This is an uncharacterized protein from Potato leafroll virus (strain Potato/Scotland/strain 1/1984) (PLrV).